The chain runs to 833 residues: Leucine--tRNA ligase (833 aa).

Positions 41-52 (PYPSGAGLHVGH) match the 'HIGH' region motif. Residues 610–614 (KMSKS) carry the 'KMSKS' region motif. Lys613 contributes to the ATP binding site.

Belongs to the class-I aminoacyl-tRNA synthetase family.

The protein localises to the cytoplasm. The enzyme catalyses tRNA(Leu) + L-leucine + ATP = L-leucyl-tRNA(Leu) + AMP + diphosphate. In Streptococcus equi subsp. zooepidemicus (strain MGCS10565), this protein is Leucine--tRNA ligase.